Reading from the N-terminus, the 90-residue chain is Acylphosphatase (90 aa).

The region spanning 5 to 90 is the Acylphosphatase-like domain; it reads CERFIVKGHV…YKPFRGFKIL (86 aa). Residues Arg20 and Asn38 contribute to the active site.

This sequence belongs to the acylphosphatase family.

It carries out the reaction an acyl phosphate + H2O = a carboxylate + phosphate + H(+). The sequence is that of Acylphosphatase (acyP) from Vibrio parahaemolyticus serotype O3:K6 (strain RIMD 2210633).